Consider the following 469-residue polypeptide: Alpha,alpha-trehalose-phosphate synthase [UDP-forming] (469 aa).

D-glucose 6-phosphate-binding residues include Tyr-87 and Asp-141. UDP contacts are provided by Arg-279 and Lys-284. UDP-alpha-D-glucose-binding residues include Arg-279 and Lys-284. Arg-317 contributes to the D-glucose 6-phosphate binding site. Residue 378–386 (DGMNLVSYE) participates in UDP-alpha-D-glucose binding. UDP is bound at residue 382–386 (LVSYE).

It belongs to the glycosyltransferase 20 family.

The catalysed reaction is D-glucose 6-phosphate + UDP-alpha-D-glucose = alpha,alpha-trehalose 6-phosphate + UDP + H(+). Its pathway is carbohydrate biosynthesis. Its function is as follows. Synthase catalytic subunit of the trehalose synthase complex that catalyzes the production of trehalose from glucose-6-phosphate and UDP-alpha-D-glucose in a two step process. The disaccharide trehalose serves as a storage carbohydrate that is mobilized during spore germination. This Yarrowia lipolytica (strain CLIB 122 / E 150) (Yeast) protein is Alpha,alpha-trehalose-phosphate synthase [UDP-forming].